A 129-amino-acid polypeptide reads, in one-letter code: Protein NrdI (129 aa).

Belongs to the NrdI family.

In terms of biological role, probably involved in ribonucleotide reductase function. This chain is Protein NrdI, found in Macrococcus caseolyticus (strain JCSC5402) (Macrococcoides caseolyticum).